The chain runs to 463 residues: A-type ATP synthase subunit B (463 aa).

It belongs to the ATPase alpha/beta chains family. In terms of assembly, has multiple subunits with at least A(3), B(3), C, D, E, F, H, I and proteolipid K(x).

The protein resides in the cell membrane. Its function is as follows. Component of the A-type ATP synthase that produces ATP from ADP in the presence of a proton gradient across the membrane. The B chain is a regulatory subunit. The protein is A-type ATP synthase subunit B of Methanothrix thermoacetophila (strain DSM 6194 / JCM 14653 / NBRC 101360 / PT) (Methanosaeta thermophila).